A 279-amino-acid polypeptide reads, in one-letter code: Stathmin domain-containing protein 1 (279 aa).

Disordered regions lie at residues 1–110 (MGCG…ERPK) and 178–254 (AAEE…VAQM). Residue glycine 2 is the site of N-myristoyl glycine attachment. The span at 22–32 (KGWEEGSKADV) shows a compositional bias: basic and acidic residues. Positions 34 to 45 (VTSSKENCSPQT) are enriched in polar residues. The region spanning 121–248 (QGIIQSRSKV…GEPLKRKKSE (128 aa)) is the SLD domain. Basic and acidic residues-rich tracts occupy residues 178–191 (AAEE…EEIR) and 232–242 (EKSDVQEGEPL).

This chain is Stathmin domain-containing protein 1 (Stmnd1), found in Mus musculus (Mouse).